A 74-amino-acid polypeptide reads, in one-letter code: Large ribosomal subunit protein uL30 (74 aa).

It belongs to the universal ribosomal protein uL30 family. Part of the 50S ribosomal subunit.

The chain is Large ribosomal subunit protein uL30 from Koribacter versatilis (strain Ellin345).